Consider the following 204-residue polypeptide: Neurensin-2 (204 aa).

The next 2 helical transmembrane spans lie at 66 to 86 (LSSG…GYAV) and 122 to 142 (LCVA…IGWL). The tract at residues 178 to 204 (SGQSWFSPPASPFGQSSVQTIQPKRDS) is disordered. The segment covering 190 to 204 (FGQSSVQTIQPKRDS) has biased composition (polar residues).

This sequence belongs to the VMP family.

The protein localises to the membrane. Its function is as follows. May play a role in maintenance and/or transport of vesicles. The polypeptide is Neurensin-2 (NRSN2) (Homo sapiens (Human)).